The following is a 330-amino-acid chain: Aspartate--ammonia ligase (330 aa).

The protein belongs to the class-II aminoacyl-tRNA synthetase family. AsnA subfamily.

It is found in the cytoplasm. It carries out the reaction L-aspartate + NH4(+) + ATP = L-asparagine + AMP + diphosphate + H(+). The protein operates within amino-acid biosynthesis; L-asparagine biosynthesis; L-asparagine from L-aspartate (ammonia route): step 1/1. This chain is Aspartate--ammonia ligase, found in Haemophilus influenzae (strain ATCC 51907 / DSM 11121 / KW20 / Rd).